Here is a 433-residue protein sequence, read N- to C-terminus: Homoserine O-acetyltransferase (433 aa).

Positions 41–385 (NVVLVCHALT…HGHDAFLVEP (345 aa)) constitute an AB hydrolase-1 domain. Residues 55 to 74 (VARSPAPERNEGTRGAGQAG) form a disordered region. The Nucleophile role is filled by Ser166. Substrate is bound at residue Arg237. Catalysis depends on residues Asp345 and His378. Asp379 lines the substrate pocket. Positions 403–433 (RAVSDDGGGGGNDSARPERDHAPVHASLFKG) are disordered.

This sequence belongs to the AB hydrolase superfamily. MetX family. Homodimer.

It is found in the cytoplasm. It catalyses the reaction L-homoserine + acetyl-CoA = O-acetyl-L-homoserine + CoA. The protein operates within amino-acid biosynthesis; L-methionine biosynthesis via de novo pathway; O-acetyl-L-homoserine from L-homoserine: step 1/1. In terms of biological role, transfers an acetyl group from acetyl-CoA to L-homoserine, forming acetyl-L-homoserine. This Halorubrum lacusprofundi (strain ATCC 49239 / DSM 5036 / JCM 8891 / ACAM 34) protein is Homoserine O-acetyltransferase.